The following is a 360-amino-acid chain: D-alanine--D-alanine ligase (360 aa).

The region spanning 146–352 (KICAEHAGLH…FSQLIDRLLQ (207 aa)) is the ATP-grasp domain. Residue 179–234 (LEEFTLPFFVKPASQGSSIGITKVHRPEELAAALEKAFMVDTKVLIEKTIEGREIE) participates in ATP binding. Residues Asp-305, Glu-319, and Asn-321 each coordinate Mg(2+).

Belongs to the D-alanine--D-alanine ligase family. Mg(2+) serves as cofactor. The cofactor is Mn(2+).

Its subcellular location is the cytoplasm. It catalyses the reaction 2 D-alanine + ATP = D-alanyl-D-alanine + ADP + phosphate + H(+). The protein operates within cell wall biogenesis; peptidoglycan biosynthesis. Its function is as follows. Cell wall formation. In Prosthecochloris aestuarii (strain DSM 271 / SK 413), this protein is D-alanine--D-alanine ligase.